A 1153-amino-acid chain; its full sequence is MLKVNYLFGCPNCNGSISVDRLHAGIPCETCLPGAVEKLDIRTIYDLLVKYSTLKGYSELYMDLEMYDDILRLFKKIVGGEPWSLQRYWLNKLVRGESFSLSAPTGVGKTTTLIVYSVYSHTTSLFVVPTKSLRDQICEKLKKIGHLVSCNKPEEDKVNVVTFHSINKNIDEFVRIKPKLLMVDDADMILKSGKTTERIAKVLQIPQEVFDDTIKMLRLKRMLRFKEDEDLINQVRELESKILGYKSSVQFIVSSATLKPKGYKQMALRFLVGFEPSTIQIYNRNVIDSFTYSNNVNELVKEIGDVGGLILVSKDYGKKYVDQITDNLNAEGYRAMKAISGRKFLEKFSNGDVDFLVGSASYYGVAVRGIDEPKRLKYVIFYGVPKTKLPLEDSLNNPLTALKIGELLKLDVTEYRKRLIYLSPAELQAVKIALRNKVSLNGKLGDLVEDLTKLKDIILDTIKANKIDKLVSDSFVIKKDTNKHYIFFPDIITYIQGSGRSSRIMNGGLTLGLSVVLVDDLELFDILNKKLRRIAEVTFMNFDELKLDEVREKLNKSRSDGSGGRSMNFKTALLVVESPTKARTISKIFGRGVRREIYGIPVYETIIIDDHSNTIIYTNIIASKGHLTDLTTEELGYYGVEINDKDIVVNYSPLYRCMSCGKTITKKVSTCPYCGSSMINSSEKIVNAIRLISTEVDEVYIATDPDQEGEKIAYDIYSLISPYNQNIFRISYNEITKTAVLNAIKSKAKINESLVKAQIARRIEDRWIGFELSSVLRSALNDNNNGTGRVQGPVLKWVVGKTSEYKANIGYVVDINIGDYVVRKFFKTKKDAETFISQLNVKVTKIAERTSTIDPLPPFTTDSLLIDAYSKFRINSSLAMKVAQELFEAGLITYHRTDSIHISPYGISIAREYLEKIGSNDFVGRSWGNEGAHEAIRPTRSMDVEELRKEIEENPFQFGIKFTWAHYRLYDLIFRRFIGSQMSSATATYTTYEININGELYTVELPTKVHGGFSSIYGIRVYNLDESHLTTRIRKGSLVSLLTYADVIRLMKDTNIGRPSTYVRTVQSLIRHGYVVESKKRSFLIATNKGQKVYEILNKYFSDMVSESRTSHLITKIDKINRNELSAEDVIMDLLNEIKNIKLVNPLQSEQYV.

The RG N-terminal-type zinc finger occupies 1-41 (MLKVNYLFGCPNCNGSISVDRLHAGIPCETCLPGAVEKLDI). Cys10, Cys13, Cys28, and Cys31 together coordinate Zn(2+). Residues Gln86 and 103–110 (APTGVGKT) contribute to the ATP site. Residues 90–276 (LNKLVRGESF…ALRFLVGFEP (187 aa)) form the Helicase ATP-binding domain. The DEAD box signature appears at 184 to 187 (DDAD). The segment at 567-1153 (MNFKTALLVV…VNPLQSEQYV (587 aa)) is topoisomerase I. One can recognise a Toprim domain in the interval 571–735 (TALLVVESPT…NIFRISYNEI (165 aa)). Glu577 is a binding site for Mg(2+). The RG C-terminal-type zinc-finger motif lies at 654-681 (LYRCMSCGKTITKKVSTCPYCGSSMINS). Zn(2+) is bound by residues Cys657, Cys660, Cys671, and Cys674. Asp704 contacts Mg(2+). The 392-residue stretch at 751–1142 (NESLVKAQIA…DLLNEIKNIK (392 aa)) folds into the Topo IA-type catalytic domain. Tyr894 acts as the O-(5'-phospho-DNA)-tyrosine intermediate in catalysis.

It in the N-terminal section; belongs to the DEAD box helicase family. DDVD subfamily. The protein in the C-terminal section; belongs to the type IA topoisomerase family. As to quaternary structure, monomer. Zn(2+) is required as a cofactor. Mg(2+) serves as cofactor.

Its subcellular location is the cytoplasm. The enzyme catalyses ATP + H2O = ADP + phosphate + H(+). Modifies the topological state of DNA by introducing positive supercoils in an ATP-dependent process, increasing the linking number in steps of +1. Binds to single-stranded DNA, transiently cleaves and then rejoins the ends, introducing a positive supercoil in the process. The scissile phosphodiester is attacked by the catalytic tyrosine of the enzyme, resulting in the formation of a DNA-(5'-phosphotyrosyl)-enzyme intermediate. Probably involved in rewinding DNA strands in regions of the chromosome that have opened up to allow replication, transcription, DNA repair and/or for DNA protection. Its function is as follows. Might be a cell cycle protein. This Sulfolobus acidocaldarius (strain ATCC 33909 / DSM 639 / JCM 8929 / NBRC 15157 / NCIMB 11770) protein is Reverse gyrase 2.